The chain runs to 429 residues: MTNKEAFSEAKKFIAGGVNSPVRAFGSVGGEPIIIDHGKGAYIYDIEGKKYLDFIQSWGPLIFGHCDADIEKAVIEAVKKGLSFGAPTLVETTLAKILCEKFENLDKIRFVSSGTEATMSAIRVARGYSKKDGLIKFEGCYHGHSDALLIKAGSGATTYGNASSGGVPQDVVRNTYLAVYNDAASVEAIFESNPGKIGAVIIEPIAGNMGLVPADKEFLQSLRALCDKFGAVLILDEVMSGFRASEFGSLPYHGILADLVTFGKVIGGGMNAAAFGGKREIMDCLSPDGAVYQAGTLSGNPIAMSAGIAALSKINASKNLYAKLENLARRLMQGFKAAANEADIALQTNVRGSMFGYFFTPHAVKNYDDALKSDTRLFAKFHAAMLKRGVYLAPSQFETGFVCEPMSEADIDFAVNAAREAFKEIKRNG.

An N6-(pyridoxal phosphate)lysine modification is found at lysine 264.

This sequence belongs to the class-III pyridoxal-phosphate-dependent aminotransferase family. HemL subfamily. In terms of assembly, homodimer. It depends on pyridoxal 5'-phosphate as a cofactor.

The protein localises to the cytoplasm. The catalysed reaction is (S)-4-amino-5-oxopentanoate = 5-aminolevulinate. Its pathway is porphyrin-containing compound metabolism; protoporphyrin-IX biosynthesis; 5-aminolevulinate from L-glutamyl-tRNA(Glu): step 2/2. In Campylobacter curvus (strain 525.92), this protein is Glutamate-1-semialdehyde 2,1-aminomutase.